The sequence spans 449 residues: Phosphoglucosamine mutase (449 aa).

S102 (phosphoserine intermediate) is an active-site residue. Residues S102, D243, D245, and D247 each contribute to the Mg(2+) site. S102 is subject to Phosphoserine.

Belongs to the phosphohexose mutase family. Requires Mg(2+) as cofactor. Post-translationally, activated by phosphorylation.

The catalysed reaction is alpha-D-glucosamine 1-phosphate = D-glucosamine 6-phosphate. In terms of biological role, catalyzes the conversion of glucosamine-6-phosphate to glucosamine-1-phosphate. The chain is Phosphoglucosamine mutase from Maricaulis maris (strain MCS10) (Caulobacter maris).